A 358-amino-acid chain; its full sequence is tRNA (guanine-N(7)-)-methyltransferase (358 aa).

A disordered region spans residues Met1–Asp29. Residues Gly99 and Glu122–Ile123 contribute to the S-adenosyl-L-methionine site. Residues Thr151 to Thr186 are compositionally biased toward low complexity. A disordered region spans residues Thr151–Thr194. Residues Asn209–Thr210 and Cys229 each bind S-adenosyl-L-methionine. Asp232 is a catalytic residue. S-adenosyl-L-methionine is bound at residue Thr330–Glu332.

It belongs to the class I-like SAM-binding methyltransferase superfamily. TrmB family. As to quaternary structure, forms a complex with trm82.

It localises to the nucleus. It carries out the reaction guanosine(46) in tRNA + S-adenosyl-L-methionine = N(7)-methylguanosine(46) in tRNA + S-adenosyl-L-homocysteine. Its pathway is tRNA modification; N(7)-methylguanine-tRNA biosynthesis. Catalyzes the formation of N(7)-methylguanine at position 46 (m7G46) in tRNA. This Aspergillus fumigatus (strain CBS 144.89 / FGSC A1163 / CEA10) (Neosartorya fumigata) protein is tRNA (guanine-N(7)-)-methyltransferase (trm8).